We begin with the raw amino-acid sequence, 480 residues long: NADH-quinone oxidoreductase subunit N (480 aa).

14 helical membrane-spanning segments follow: residues 12-32 (LLIP…LGVF), 41-61 (LVQW…LFLV), 80-100 (FSKT…MPYL), 105-125 (LGKI…MMMV), 130-150 (LIAM…LAAF), 165-185 (FVLG…VYGF), 204-224 (IGLT…VSAA), 237-257 (APTP…IVLL), 275-295 (VIWM…LTQQ), 300-320 (LMAY…AAAS), 326-346 (ALLV…ATIL), 372-392 (GWSM…VGFF), 406-428 (LMIL…LRIV), and 450-470 (IARI…WLVF).

The protein belongs to the complex I subunit 2 family. In terms of assembly, NDH-1 is composed of 14 different subunits. Subunits NuoA, H, J, K, L, M, N constitute the membrane sector of the complex.

It localises to the cell inner membrane. The catalysed reaction is a quinone + NADH + 5 H(+)(in) = a quinol + NAD(+) + 4 H(+)(out). Functionally, NDH-1 shuttles electrons from NADH, via FMN and iron-sulfur (Fe-S) centers, to quinones in the respiratory chain. The immediate electron acceptor for the enzyme in this species is believed to be ubiquinone. Couples the redox reaction to proton translocation (for every two electrons transferred, four hydrogen ions are translocated across the cytoplasmic membrane), and thus conserves the redox energy in a proton gradient. The chain is NADH-quinone oxidoreductase subunit N from Maricaulis maris (strain MCS10) (Caulobacter maris).